The sequence spans 346 residues: Annexin A1 (346 aa).

A2 carries the N-acetylalanine modification. Residue S5 is modified to Phosphoserine; by TRPM7. Q19 participates in a covalent cross-link: Isoglutamyl lysine isopeptide (Gln-Lys) (interchain with K-?). Residue Y21 is modified to Phosphotyrosine; by EGFR. The tract at residues 25-47 (VKGSKGGPGSAVSPYPTFNPSSD) is disordered. Phosphoserine is present on residues S34 and S37. At T41 the chain carries Phosphothreonine. 4 Annexin repeats span residues 42–113 (FNPS…ALLK), 114–185 (TPAQ…SLAK), 197–269 (DLAD…VVVK), and 273–344 (SKPM…ALCG). K58 is subject to N6-acetyllysine. G59, V60, E62, K97, L100, E105, M127, G129, G131, T132, and E134 together coordinate Ca(2+). T136 bears the Phosphothreonine mark. Ca(2+) is bound by residues D171, G210, and R213. K214 is covalently cross-linked (Glycyl lysine isopeptide (Lys-Gly) (interchain with G-Cter in SUMO1); alternate). Residue K214 forms a Glycyl lysine isopeptide (Lys-Gly) (interchain with G-Cter in SUMO2); alternate linkage. G215 serves as a coordination point for Ca(2+). Residue K239 is modified to N6-acetyllysine. Residues D253, E255, and L256 each contribute to the Ca(2+) site. Residue K257 forms a Glycyl lysine isopeptide (Lys-Gly) (interchain with G-Cter in SUMO1) linkage. Ca(2+) contacts are provided by E261, M286, G288, and G290. K312 carries the N6-acetyllysine modification. Cysteines 324 and 343 form a disulfide. Ca(2+)-binding residues include L328, E330, and T331. K332 participates in a covalent cross-link: Glycyl lysine isopeptide (Lys-Gly) (interchain with G-Cter in SUMO1). Residue E336 coordinates Ca(2+).

This sequence belongs to the annexin family. As to quaternary structure, homodimer; non-covalently linked. Homodimer; linked by transglutamylation. Homodimers linked by transglutamylation are observed in placenta, but not in other tissues. Interacts with S100A11. Heterotetramer, formed by two molecules each of S100A11 and ANXA1. Interacts with DYSF. Interacts with EGFR. In terms of processing, phosphorylated by EGFR. Phosphorylated by protein kinase C and TRPM7. Phosphorylated in response to EGF treatment. Post-translationally, sumoylated. Proteolytically cleaved by cathepsin CTSG to release the active N-terminal peptide Ac2-26. Detected in lung and spleen (at protein level).

The protein resides in the nucleus. The protein localises to the cytoplasm. It localises to the cell projection. Its subcellular location is the cilium. It is found in the basolateral cell membrane. The protein resides in the lateral cell membrane. The protein localises to the early endosome. It localises to the cell membrane. Its subcellular location is the cytoplasmic vesicle membrane. It is found in the apical cell membrane. The protein resides in the membrane. The protein localises to the endosome. It localises to the secreted. Its subcellular location is the extracellular space. It is found in the extracellular exosome. The protein resides in the cytoplasmic vesicle. The protein localises to the secretory vesicle lumen. It localises to the phagocytic cup. In terms of biological role, plays important roles in the innate immune response as effector of glucocorticoid-mediated responses and regulator of the inflammatory process. Has anti-inflammatory activity. Plays a role in glucocorticoid-mediated down-regulation of the early phase of the inflammatory response. Contributes to the adaptive immune response by enhancing signaling cascades that are triggered by T-cell activation, regulates differentiation and proliferation of activated T-cells. Promotes the differentiation of T-cells into Th1 cells and negatively regulates differentiation into Th2 cells. Has no effect on unstimulated T-cells. Negatively regulates hormone exocytosis via activation of the formyl peptide receptors and reorganization of the actin cytoskeleton. Has high affinity for Ca(2+) and can bind up to eight Ca(2+) ions. Displays Ca(2+)-dependent binding to phospholipid membranes. Plays a role in the formation of phagocytic cups and phagosomes. Plays a role in phagocytosis by mediating the Ca(2+)-dependent interaction between phagosomes and the actin cytoskeleton. Functions at least in part by activating the formyl peptide receptors and downstream signaling cascades. Promotes chemotaxis of granulocytes and monocytes via activation of the formyl peptide receptors. Promotes rearrangement of the actin cytoskeleton, cell polarization and cell migration. Promotes resolution of inflammation and wound healing. Acts via neutrophil N-formyl peptide receptors to enhance the release of CXCL2. This chain is Annexin A1 (ANXA1), found in Sus scrofa (Pig).